Reading from the N-terminus, the 327-residue chain is Fructose import binding protein FruE (327 aa).

An N-terminal signal peptide occupies residues 1 to 22 (MKNWKKAIALVASAAALVSVAA). Cys-23 carries N-palmitoyl cysteine lipidation. Cys-23 carries S-diacylglycerol cysteine lipidation.

It belongs to the bacterial solute-binding protein 2 family. The complex is composed of an ATP-binding protein (FruK), two transmembrane proteins (FruF and FruG) and a solute-binding protein (FruE).

It is found in the cell membrane. Functionally, part of the high-affinity ABC transporter complex FruEKFG involved in fructose uptake. Can also transport ribose and xylose, with lower affinity. Binds fructose, ribose and xylose, with fructose as the preferred substrate. This chain is Fructose import binding protein FruE, found in Bifidobacterium longum (strain NCC 2705).